The following is a 195-amino-acid chain: RSFPLETRLSNPQIKKLIEGGLSAPQTVTPITDPLSEAELECLLSIPLARSRPSVAVYLSGPWLQPSQNQALMLVDTGAENTVLPQNWLVRDYPRIPAAVLGAGGVSRNRYNWLQGPLTLALKPEGPFITIPKILVDTFDKWQILGRDVLSRLQASISIPEEVRPPMVGVLDAPPSHIGLEHLPVPPEVPQFPLN.

Residues 71–149 (ALMLVDTGAE…DKWQILGRDV (79 aa)) form the Peptidase A2 domain. Aspartate 76 is an active-site residue.

The sequence is that of Protease from Bos taurus (Bovine).